The following is a 154-amino-acid chain: Calmodulin-like protein 4 (154 aa).

EF-hand domains are found at residues 7-42, 43-78, 80-115, and 116-151; these read EQMV…LGLE, PTDQ…KMKD, DGDE…LGEK, and MTDE…AERK. The Ca(2+) site is built by Asp20, Asn22, Asp24, Cys26, Glu31, Asp56, Asp58, Asn60, Glu67, Asp93, Asp95, Asn97, and Glu104. At Lys115 the chain carries N6,N6,N6-trimethyllysine. Ca(2+)-binding residues include Asp129, Asp131, Asp133, Gln135, and Glu140.

Belongs to the calmodulin family.

Its function is as follows. Potential calcium sensor. This Oryza sativa subsp. japonica (Rice) protein is Calmodulin-like protein 4 (CML4).